The sequence spans 120 residues: uncharacterized protein (120 aa).

A helical transmembrane segment spans residues 47-63; sequence VSIVIGLCTVLISAGAG.

It is found in the membrane. This is an uncharacterized protein from Sinorhizobium fredii (strain NBRC 101917 / NGR234).